The chain runs to 258 residues: Imidazole glycerol phosphate synthase subunit HisF (258 aa).

Catalysis depends on residues Asp-12 and Asp-131.

Belongs to the HisA/HisF family. Heterodimer of HisH and HisF.

The protein localises to the cytoplasm. The catalysed reaction is 5-[(5-phospho-1-deoxy-D-ribulos-1-ylimino)methylamino]-1-(5-phospho-beta-D-ribosyl)imidazole-4-carboxamide + L-glutamine = D-erythro-1-(imidazol-4-yl)glycerol 3-phosphate + 5-amino-1-(5-phospho-beta-D-ribosyl)imidazole-4-carboxamide + L-glutamate + H(+). It functions in the pathway amino-acid biosynthesis; L-histidine biosynthesis; L-histidine from 5-phospho-alpha-D-ribose 1-diphosphate: step 5/9. IGPS catalyzes the conversion of PRFAR and glutamine to IGP, AICAR and glutamate. The HisF subunit catalyzes the cyclization activity that produces IGP and AICAR from PRFAR using the ammonia provided by the HisH subunit. The protein is Imidazole glycerol phosphate synthase subunit HisF of Sinorhizobium medicae (strain WSM419) (Ensifer medicae).